The following is a 520-amino-acid chain: Probable E3 ubiquitin-protein ligase XBOS33 (520 aa).

5 ANK repeats span residues Gly44 to Val73, Cys77 to Arg106, Ser111 to Pro140, Gly185 to Ala214, and Ala228 to Leu258. The RING-type zinc-finger motif lies at Cys327–Arg377. A compositionally biased stretch (polar residues) spans Gln467–His479. Residues Gln467–Leu493 form a disordered region. The segment covering Glu484 to Leu493 has biased composition (basic and acidic residues).

The enzyme catalyses S-ubiquitinyl-[E2 ubiquitin-conjugating enzyme]-L-cysteine + [acceptor protein]-L-lysine = [E2 ubiquitin-conjugating enzyme]-L-cysteine + N(6)-ubiquitinyl-[acceptor protein]-L-lysine.. It functions in the pathway protein modification; protein ubiquitination. The polypeptide is Probable E3 ubiquitin-protein ligase XBOS33 (XBOS33) (Oryza sativa subsp. japonica (Rice)).